Here is a 967-residue protein sequence, read N- to C-terminus: Translation initiation factor IF-2 (967 aa).

Residues 34–363 form a disordered region; sequence ASSTVEPPVA…APAVGGVSVP (330 aa). Composition is skewed to low complexity over residues 51-96 and 103-154; these read PAGG…GNAA and ASEA…TPGP. The segment covering 184 to 196 has biased composition (gly residues); sequence RSEGGAQRGGPRP. Positions 197-206 are enriched in low complexity; that stretch reads GGQQRSGKPG. Over residues 300-333 the composition is skewed to gly residues; sequence PRRGGGPGGGPGGGGGFRGRGGRGGTQGAFGRGG. The segment covering 334 to 345 has biased composition (basic residues); the sequence is ARGKHRKSKRAK. The tr-type G domain maps to 460–632; sequence PRPPVVTVMG…IVLTADGALE (173 aa). Positions 469-476 are G1; that stretch reads GHVDHGKT. A GTP-binding site is contributed by 469-476; the sequence is GHVDHGKT. The G2 stretch occupies residues 494–498; sequence GITQH. The segment at 519 to 522 is G3; it reads DTPG. GTP contacts are provided by residues 519–523 and 573–576; these read DTPGH and NKVD. Residues 573-576 form a G4 region; the sequence is NKVD. Residues 609-611 form a G5 region; sequence SAR.

Belongs to the TRAFAC class translation factor GTPase superfamily. Classic translation factor GTPase family. IF-2 subfamily.

The protein localises to the cytoplasm. One of the essential components for the initiation of protein synthesis. Protects formylmethionyl-tRNA from spontaneous hydrolysis and promotes its binding to the 30S ribosomal subunits. Also involved in the hydrolysis of GTP during the formation of the 70S ribosomal complex. The chain is Translation initiation factor IF-2 from Kocuria rhizophila (strain ATCC 9341 / DSM 348 / NBRC 103217 / DC2201).